The following is a 252-amino-acid chain: Probable ABC transporter ATP-binding protein p29 (252 aa).

The region spanning 8 to 252 (LEIKNLTFKN…NILDQVFKND (245 aa)) is the ABC transporter domain. An ATP-binding site is contributed by 42 to 49 (GSSGQGKS).

Belongs to the ABC transporter superfamily.

Its function is as follows. Part of a high-affinity transport system. The chain is Probable ABC transporter ATP-binding protein p29 from Mesomycoplasma hyorhinis (Mycoplasma hyorhinis).